We begin with the raw amino-acid sequence, 237 residues long: Probable F-box protein At1g53815 (237 aa).

In terms of domain architecture, F-box spans 41–72; it reads ISNILSRLPLKSKAKCRCVSKLWSSIIRRPNY.

This is Probable F-box protein At1g53815 from Arabidopsis thaliana (Mouse-ear cress).